Here is a 154-residue protein sequence, read N- to C-terminus: Superoxide dismutase [Cu-Zn] (154 aa).

Residues His-47, His-49, and His-64 each coordinate Cu cation. Cys-58 and Cys-147 are joined by a disulfide. Zn(2+) is bound by residues His-64, His-72, His-81, and Asp-84. His-121 is a Cu cation binding site. Positions 125-136 are enriched in basic and acidic residues; it reads DDLGKGGNEESL. The disordered stretch occupies residues 125 to 144; the sequence is DDLGKGGNEESLKTGNAGPR. Residue Arg-144 coordinates substrate.

It belongs to the Cu-Zn superoxide dismutase family. Homodimer. Cu cation serves as cofactor. Zn(2+) is required as a cofactor.

The protein localises to the cytoplasm. It catalyses the reaction 2 superoxide + 2 H(+) = H2O2 + O2. In terms of biological role, destroys radicals which are normally produced within the cells and which are toxic to biological systems. The chain is Superoxide dismutase [Cu-Zn] (SOD1) from Cordyceps tenuipes (Entomopathogenic fungus).